A 286-amino-acid polypeptide reads, in one-letter code: 3-methyl-2-oxobutanoate hydroxymethyltransferase (286 aa).

Positions 51 and 90 each coordinate Mg(2+). Residues Asp51 to Ser52, Asp90, and Lys120 each bind 3-methyl-2-oxobutanoate. Glu122 contributes to the Mg(2+) binding site. Glu189 acts as the Proton acceptor in catalysis. Residues Thr263 to Ser286 form a disordered region.

It belongs to the PanB family. As to quaternary structure, homodecamer; pentamer of dimers. Mg(2+) serves as cofactor.

Its subcellular location is the cytoplasm. The catalysed reaction is 3-methyl-2-oxobutanoate + (6R)-5,10-methylene-5,6,7,8-tetrahydrofolate + H2O = 2-dehydropantoate + (6S)-5,6,7,8-tetrahydrofolate. The protein operates within cofactor biosynthesis; (R)-pantothenate biosynthesis; (R)-pantoate from 3-methyl-2-oxobutanoate: step 1/2. Its function is as follows. Catalyzes the reversible reaction in which hydroxymethyl group from 5,10-methylenetetrahydrofolate is transferred onto alpha-ketoisovalerate to form ketopantoate. The chain is 3-methyl-2-oxobutanoate hydroxymethyltransferase from Mesorhizobium japonicum (strain LMG 29417 / CECT 9101 / MAFF 303099) (Mesorhizobium loti (strain MAFF 303099)).